We begin with the raw amino-acid sequence, 316 residues long: Phospho-N-acetylmuramoyl-pentapeptide-transferase (316 aa).

Helical transmembrane passes span 5–25 (IILATVVAFVLSLASGPLFIP), 49–69 (GTPTMGGIMFITATVISTLIF), 76–96 (LAILLLGFLGYGLIGFADDFL), 116–136 (FLLAIIISYFAQEYVGTEVIF), 141–161 (TTIDLGNFYIPFIVFVIVGTV), 172–192 (GLAAGVSFIVMAFFTMTALFL), 195–212 (ITYGAFSAALTGGLLGFL), 221–241 (IFMGDTGSLAIGGAIATAAVL), 244–264 (LPLILPLIGIIYVAEAFSVII), and 296–316 (VVYAFWIVTLIAMFLSFYSLS).

Belongs to the glycosyltransferase 4 family. MraY subfamily. Mg(2+) serves as cofactor.

Its subcellular location is the cell membrane. It carries out the reaction UDP-N-acetyl-alpha-D-muramoyl-L-alanyl-gamma-D-glutamyl-meso-2,6-diaminopimeloyl-D-alanyl-D-alanine + di-trans,octa-cis-undecaprenyl phosphate = di-trans,octa-cis-undecaprenyl diphospho-N-acetyl-alpha-D-muramoyl-L-alanyl-D-glutamyl-meso-2,6-diaminopimeloyl-D-alanyl-D-alanine + UMP. The protein operates within cell wall biogenesis; peptidoglycan biosynthesis. Functionally, catalyzes the initial step of the lipid cycle reactions in the biosynthesis of the cell wall peptidoglycan: transfers peptidoglycan precursor phospho-MurNAc-pentapeptide from UDP-MurNAc-pentapeptide onto the lipid carrier undecaprenyl phosphate, yielding undecaprenyl-pyrophosphoryl-MurNAc-pentapeptide, known as lipid I. This Thermoanaerobacter pseudethanolicus (strain ATCC 33223 / 39E) (Clostridium thermohydrosulfuricum) protein is Phospho-N-acetylmuramoyl-pentapeptide-transferase.